Reading from the N-terminus, the 495-residue chain is Sugar phosphate exchanger 3 (495 aa).

The chain crosses the membrane as a helical span at residues 16–36 (FSHHHMVVFLLTFFSYSLLHA). Residue N58 is glycosylated (N-linked (GlcNAc...) asparagine). Transmembrane regions (helical) follow at residues 82–102 (TLFL…GLFI), 114–134 (WVLS…GTLT), 148–168 (LWIV…AVMG), 178–198 (VVFG…ACLA), and 210–230 (FLVT…GLLV). An N-linked (GlcNAc...) asparagine glycan is attached at N267. 6 consecutive transmembrane segments (helical) span residues 298–318 (LAYA…PFYL), 334–354 (IWYD…SDML), 358–378 (APVL…YSRS), 387–407 (LLMA…SSAI), 429–449 (GIVD…VSLI), and 453–473 (LGWM…VLFI).

Belongs to the major facilitator superfamily. Organophosphate:Pi antiporter (OPA) (TC 2.A.1.4) family. As to quaternary structure, interacts with ATRAID; the interaction is direct and both proteins are mutually dependent for their stability. In terms of processing, glycosylated.

The protein resides in the endoplasmic reticulum membrane. It localises to the lysosome membrane. Its function is as follows. Unlike the other SLC37 members, lacks glucose-6-phosphate antiporter activity. In osteoclasts, forms a transporter complex with ATRAID for nitrogen-containing-bisphophonates (N-BPs) required for releasing N-BP molecules that have trafficked to lysosomes through fluid-phase endocytosis into the cytosol. This is Sugar phosphate exchanger 3 (SLC37A3) from Bos taurus (Bovine).